A 163-amino-acid polypeptide reads, in one-letter code: Glycine cleavage system H-like protein gcvH5, mitochondrial (163 aa).

A mitochondrion-targeting transit peptide spans 1 to 23 (MFLFKTTNNLRKSLSNKFFCTRY). The region spanning 50–136 (IGTLGLTENG…MSKGWLCKIK (87 aa)) is the Lipoyl-binding domain.

The protein belongs to the GcvH family.

It localises to the mitochondrion. The sequence is that of Glycine cleavage system H-like protein gcvH5, mitochondrial (gcvH5) from Dictyostelium discoideum (Social amoeba).